The sequence spans 381 residues: MESIGIVSPQTMHFSEPLRLQNGSSLANYDLVVETYGKLNAARSNAVLVCHALNASHHVAGVYADDPKNVGWWDNMVGPGKPLDTNRFFVIGVNNLGSCFGSTGPMSIDPSTGRPYGASFPVVTVEDWVNAQARVADEFGIEKFAAVMGGSLGGMQALAWSMMYPDRLEHCIVVASTPKLSAQNIAFNEVARSSILSDPDFHGGDYYAHGVKPKRGLRVARMIGHITYLSDDDMAAKFGRALRRAEGAEKAYNFNFDVEFEVESYLRYQGDKFADYFDANTYLLITRALDYFDPAKAYDGDLTAALAHTKAKYLIASFTTDWRFAPARSRELVKALLDHKRQVTYGEIDAPHGHDAFLLDDARYHNLMRAYYERIAAEVNA.

The AB hydrolase-1 domain maps to 45–360 (NAVLVCHALN…PHGHDAFLLD (316 aa)). The active-site Nucleophile is the S151. Substrate is bound at residue R221. Residues D321 and H354 contribute to the active site. D355 contributes to the substrate binding site.

This sequence belongs to the AB hydrolase superfamily. MetX family. In terms of assembly, homodimer.

The protein resides in the cytoplasm. It catalyses the reaction L-homoserine + succinyl-CoA = O-succinyl-L-homoserine + CoA. Its pathway is amino-acid biosynthesis; L-methionine biosynthesis via de novo pathway; O-succinyl-L-homoserine from L-homoserine: step 1/1. Functionally, transfers a succinyl group from succinyl-CoA to L-homoserine, forming succinyl-L-homoserine. This chain is Homoserine O-succinyltransferase, found in Paraburkholderia phymatum (strain DSM 17167 / CIP 108236 / LMG 21445 / STM815) (Burkholderia phymatum).